The chain runs to 294 residues: dTDP-4-dehydrorhamnose reductase (294 aa).

Residues 11 to 13 (GQL), 38 to 39 (DI), and 62 to 64 (AYT) contribute to the NADH site. Residues 12–13 (QL), 38–39 (DI), and 62–64 (AYT) contribute to the NADPH site. 103–104 (TD) is a binding site for dTDP-beta-L-rhamnose. Residues tyrosine 127 and lysine 131 each contribute to the NADH site. Residues tyrosine 127 and lysine 131 each contribute to the NADPH site. Tyrosine 127 serves as the catalytic Proton donor/acceptor. Tryptophan 152 contributes to the dTDP-beta-L-rhamnose binding site.

Belongs to the dTDP-4-dehydrorhamnose reductase family. As to quaternary structure, homodimer. Requires Mg(2+) as cofactor.

The catalysed reaction is dTDP-beta-L-rhamnose + NADP(+) = dTDP-4-dehydro-beta-L-rhamnose + NADPH + H(+). It functions in the pathway carbohydrate biosynthesis; dTDP-L-rhamnose biosynthesis. It participates in bacterial outer membrane biogenesis; LPS O-antigen biosynthesis. Its function is as follows. Involved in the biosynthesis of the dTDP-L-rhamnose which is an important component of lipopolysaccharide (LPS). Catalyzes the reduction of dTDP-6-deoxy-L-lyxo-4-hexulose to yield dTDP-L-rhamnose. The polypeptide is dTDP-4-dehydrorhamnose reductase (Aggregatibacter actinomycetemcomitans (Actinobacillus actinomycetemcomitans)).